A 309-amino-acid polypeptide reads, in one-letter code: Olfactory receptor 1A1 (309 aa).

At 1-25 (MRENNQSSTLEFILLGVTGQQEQED) the chain is on the extracellular side. Residue Asn5 is glycosylated (N-linked (GlcNAc...) asparagine). A helical transmembrane segment spans residues 26-49 (FFYILFLFIYPITLIGNLLIVLAI). Over 50–57 (CSDVHLHN) the chain is Cytoplasmic. A helical membrane pass occupies residues 58 to 79 (PMYFLLANLSLVDIFFSSVTIP). Topologically, residues 80 to 100 (KMLANHLSGSKSISFGGCLTQ) are extracellular. A disulfide bridge links Cys97 with Cys189. The chain crosses the membrane as a helical span at residues 101–120 (MYFMIDLGNTDSYTLAAMAY). The Cytoplasmic portion of the chain corresponds to 121-139 (DRAVAISRPLHYTTIMSPR). Residues 140-158 (SCIWLIAGSWVIGNANALP) form a helical membrane-spanning segment. The Extracellular segment spans residues 159–195 (HTLLTASLSFCGNQEVANFYCDITPLLKLSCSDIHFH). A helical membrane pass occupies residues 196–218 (VKMMYLGVGIFSVPLLCIIVSYI). Residues 219 to 235 (RVFSTVFQVPSTKGVLK) lie on the Cytoplasmic side of the membrane. A helical membrane pass occupies residues 236-258 (AFSTCGSHLTVVSLYYGTVMGMY). The Extracellular portion of the chain corresponds to 259-270 (FRPLTNYSLKDA). A glycan (N-linked (GlcNAc...) asparagine) is linked at Asn264. The chain crosses the membrane as a helical span at residues 271-290 (VITVMCTAVTPMLNPFIYSL). Topologically, residues 291–309 (RNRDMKAALQKLFNKRISS) are cytoplasmic.

The protein belongs to the G-protein coupled receptor 1 family.

It localises to the cell membrane. Odorant receptor. This is Olfactory receptor 1A1 (OR1A1) from Gorilla gorilla gorilla (Western lowland gorilla).